The following is a 1045-amino-acid chain: Suppression of tumorigenicity 18 protein (1045 aa).

Disordered stretches follow at residues 38–90, 158–228, and 340–364; these read KKRR…NDHA, KAES…YNRK, and PRVT…RREA. Residues 52–63 are compositionally biased toward basic residues; the sequence is NKRKSLLMKPRH. Composition is skewed to basic and acidic residues over residues 69–90 and 159–177; these read GCKE…NDHA and AESD…NGRD. 6 consecutive CCHHC-type zinc fingers follow at residues 357–400, 401–444, 713–756, 757–800, 805–848, and 858–901; these read PRPE…PLEI, LAMH…KLAM, RDLK…LKSL, MAAN…GIKM, EEKE…QKEN, and KLNK…IKKV. The Zn(2+) site is built by cysteine 366, cysteine 371, histidine 384, cysteine 390, cysteine 410, cysteine 415, histidine 428, cysteine 434, cysteine 722, cysteine 727, histidine 740, cysteine 746, cysteine 766, cysteine 771, histidine 784, cysteine 790, cysteine 814, cysteine 819, histidine 832, cysteine 838, cysteine 867, cysteine 872, histidine 885, and cysteine 891. Residues 918-987 adopt a coiled-coil conformation; it reads IDGDEEIRHL…KELAGLSQAL (70 aa).

Belongs to the MYT1 family.

Its subcellular location is the nucleus. Repressor that binds to DNA sequences containing a bipartite element consisting of a direct repeat of the sequence 5'-AAAGTTT-3' separated by 2-9 nucleotides. Represses basal transcription activity from target promoters. The sequence is that of Suppression of tumorigenicity 18 protein (St18) from Mus musculus (Mouse).